The following is a 440-amino-acid chain: Xylose isomerase (440 aa).

Catalysis depends on residues His-101 and Asp-104. Residues Glu-232, Glu-268, His-271, Asp-296, Asp-307, Asp-309, and Asp-339 each coordinate Mg(2+).

The protein belongs to the xylose isomerase family. As to quaternary structure, homotetramer. Requires Mg(2+) as cofactor.

It is found in the cytoplasm. The enzyme catalyses alpha-D-xylose = alpha-D-xylulofuranose. The sequence is that of Xylose isomerase from Salmonella paratyphi B (strain ATCC BAA-1250 / SPB7).